A 422-amino-acid polypeptide reads, in one-letter code: Carboxypeptidase B2 (422 aa).

Positions 1–21 (MKLHGLGILVAIILYEQHGFA) are cleaved as a signal peptide. Positions 22 to 113 (FQSGQVLSAL…QTFNDTVSPR (92 aa)) are cleaved as a propeptide — activation peptide. N-linked (GlcNAc...) asparagine glycosylation is found at N43, N72, N84, and N107. The Peptidase M14 domain occupies 121–418 (QYHSLNEIYS…AAISKIVWHV (298 aa)). Residues C177 and C190 are joined by a disulfide bond. The Zn(2+) site is built by H180 and E183. Substrate contacts are provided by residues 180–183 (HARE) and R238. N-linked (GlcNAc...) asparagine glycosylation is present at N240. Cystine bridges form between C249–C273 and C264–C278. 255 to 256 (NR) lines the substrate pocket. A Zn(2+)-binding site is contributed by H309. 310–311 (SY) serves as a coordination point for substrate. N322 carries N-linked (GlcNAc...) asparagine glycosylation. Residue Y362 participates in substrate binding. Catalysis depends on E384, which acts as the Proton donor/acceptor.

It belongs to the peptidase M14 family. The cofactor is Zn(2+). As to expression, plasma; synthesized in the liver.

The protein localises to the secreted. It catalyses the reaction Release of C-terminal Arg and Lys from a polypeptide.. TAFI/CPB2 is unique among carboxypeptidases in that it spontaneously inactivates with a short half-life, a property that is crucial for its role in controlling blood clot lysis. The zymogen is stabilized by interactions with the activation peptide. Release of the activation peptide increases a dynamic flap mobility and in time this leads to conformational changes that disrupt the catalytic site and expose a cryptic thrombin-cleavage site present at Arg-323. Its function is as follows. Cleaves C-terminal arginine or lysine residues from biologically active peptides such as kinins or anaphylatoxins in the circulation thereby regulating their activities. Down-regulates fibrinolysis by removing C-terminal lysine residues from fibrin that has already been partially degraded by plasmin. This Mus musculus (Mouse) protein is Carboxypeptidase B2 (Cpb2).